Consider the following 146-residue polypeptide: 3-hydroxyacyl-[acyl-carrier-protein] dehydratase FabZ (146 aa).

Residue His49 is part of the active site.

The protein belongs to the thioester dehydratase family. FabZ subfamily.

It is found in the cytoplasm. It carries out the reaction a (3R)-hydroxyacyl-[ACP] = a (2E)-enoyl-[ACP] + H2O. Its function is as follows. Involved in unsaturated fatty acids biosynthesis. Catalyzes the dehydration of short chain beta-hydroxyacyl-ACPs and long chain saturated and unsaturated beta-hydroxyacyl-ACPs. This chain is 3-hydroxyacyl-[acyl-carrier-protein] dehydratase FabZ, found in Ectopseudomonas mendocina (strain ymp) (Pseudomonas mendocina).